Reading from the N-terminus, the 267-residue chain is Tryptophan synthase alpha chain (267 aa).

Residues Glu43 and Asp54 each act as proton acceptor in the active site.

The protein belongs to the TrpA family. In terms of assembly, tetramer of two alpha and two beta chains.

The catalysed reaction is (1S,2R)-1-C-(indol-3-yl)glycerol 3-phosphate + L-serine = D-glyceraldehyde 3-phosphate + L-tryptophan + H2O. The protein operates within amino-acid biosynthesis; L-tryptophan biosynthesis; L-tryptophan from chorismate: step 5/5. Functionally, the alpha subunit is responsible for the aldol cleavage of indoleglycerol phosphate to indole and glyceraldehyde 3-phosphate. This is Tryptophan synthase alpha chain from Bacillus licheniformis (strain ATCC 14580 / DSM 13 / JCM 2505 / CCUG 7422 / NBRC 12200 / NCIMB 9375 / NCTC 10341 / NRRL NRS-1264 / Gibson 46).